A 283-amino-acid chain; its full sequence is Thymidylate synthase (283 aa).

R22 contributes to the dUMP binding site. C160 (nucleophile) is an active-site residue. DUMP is bound by residues 180-183 (RSCD), N191, and 221-223 (HIY). D183 contributes to the (6R)-5,10-methylene-5,6,7,8-tetrahydrofolate binding site. S282 contacts (6R)-5,10-methylene-5,6,7,8-tetrahydrofolate.

The protein belongs to the thymidylate synthase family. Bacterial-type ThyA subfamily. In terms of assembly, homodimer.

It localises to the cytoplasm. It carries out the reaction dUMP + (6R)-5,10-methylene-5,6,7,8-tetrahydrofolate = 7,8-dihydrofolate + dTMP. It functions in the pathway pyrimidine metabolism; dTTP biosynthesis. In terms of biological role, catalyzes the reductive methylation of 2'-deoxyuridine-5'-monophosphate (dUMP) to 2'-deoxythymidine-5'-monophosphate (dTMP) while utilizing 5,10-methylenetetrahydrofolate (mTHF) as the methyl donor and reductant in the reaction, yielding dihydrofolate (DHF) as a by-product. This enzymatic reaction provides an intracellular de novo source of dTMP, an essential precursor for DNA biosynthesis. This Histophilus somni (strain 129Pt) (Haemophilus somnus) protein is Thymidylate synthase.